The primary structure comprises 292 residues: GTP cyclohydrolase FolE2 (292 aa).

Belongs to the GTP cyclohydrolase IV family.

The enzyme catalyses GTP + H2O = 7,8-dihydroneopterin 3'-triphosphate + formate + H(+). It participates in cofactor biosynthesis; 7,8-dihydroneopterin triphosphate biosynthesis; 7,8-dihydroneopterin triphosphate from GTP: step 1/1. Functionally, converts GTP to 7,8-dihydroneopterin triphosphate. This chain is GTP cyclohydrolase FolE2, found in Staphylococcus aureus (strain Newman).